The primary structure comprises 727 residues: Beta-galactosidase 2 (727 aa).

A signal peptide spans 1 to 27 (MSMHFRNKAWIILAILCFSSLIHSTEA). Residue E185 is the Proton donor of the active site. E254 functions as the Nucleophile in the catalytic mechanism. N-linked (GlcNAc...) asparagine glycosylation is present at N255.

It belongs to the glycosyl hydrolase 35 family. In terms of tissue distribution, ubiquitous, with higher expression levels in roots and siliques.

The protein localises to the secreted. It localises to the extracellular space. The protein resides in the apoplast. The catalysed reaction is Hydrolysis of terminal non-reducing beta-D-galactose residues in beta-D-galactosides.. The sequence is that of Beta-galactosidase 2 (BGAL2) from Arabidopsis thaliana (Mouse-ear cress).